The primary structure comprises 455 residues: DNA N(6)-methyladenine demethylase ALKBH1C (455 aa).

Disordered stretches follow at residues 1–114 (MNHS…AGDN) and 173–194 (SSVEDQKSAPKADGAGNSSNES). A Fe2OG dioxygenase domain is found at 345 to 455 (LPDICIVNFY…GRLNLTFRQY (111 aa)). Residue 352–354 (NFY) participates in 2-oxoglutarate binding. H363, D365, and H423 together coordinate Fe cation. Position 447–453 (447–453 (RLNLTFR)) interacts with 2-oxoglutarate.

This sequence belongs to the alkB family. Fe(2+) serves as cofactor. Expressed at low levels in roots and seedlings, but barely in cauline leaves, rosette leaves, stems, siliques and flowers.

The protein localises to the nucleus. It localises to the cytoplasm. The catalysed reaction is an N(6)-methyl-2'-deoxyadenosine in DNA + 2-oxoglutarate + O2 = a 2'-deoxyadenosine in DNA + formaldehyde + succinate + CO2. Dioxygenase that catalyzes DNA N(6)-methyladenine (6 mA) demethylation with a low efficiency. This chain is DNA N(6)-methyladenine demethylase ALKBH1C, found in Arabidopsis thaliana (Mouse-ear cress).